A 176-amino-acid polypeptide reads, in one-letter code: Large ribosomal subunit protein uL6 (176 aa).

It belongs to the universal ribosomal protein uL6 family. As to quaternary structure, part of the 50S ribosomal subunit.

Its function is as follows. This protein binds to the 23S rRNA, and is important in its secondary structure. It is located near the subunit interface in the base of the L7/L12 stalk, and near the tRNA binding site of the peptidyltransferase center. This is Large ribosomal subunit protein uL6 from Burkholderia multivorans (strain ATCC 17616 / 249).